Here is a 248-residue protein sequence, read N- to C-terminus: Cell division protein ZapD (248 aa).

It belongs to the ZapD family. As to quaternary structure, interacts with FtsZ.

It localises to the cytoplasm. Cell division factor that enhances FtsZ-ring assembly. Directly interacts with FtsZ and promotes bundling of FtsZ protofilaments, with a reduction in FtsZ GTPase activity. The polypeptide is Cell division protein ZapD (Aliivibrio fischeri (strain ATCC 700601 / ES114) (Vibrio fischeri)).